We begin with the raw amino-acid sequence, 340 residues long: Ferrochelatase (340 aa).

2 residues coordinate Fe cation: H189 and E292.

Belongs to the ferrochelatase family.

The protein localises to the cytoplasm. The catalysed reaction is heme b + 2 H(+) = protoporphyrin IX + Fe(2+). Its pathway is porphyrin-containing compound metabolism; protoheme biosynthesis; protoheme from protoporphyrin-IX: step 1/1. Functionally, catalyzes the ferrous insertion into protoporphyrin IX. This Pseudomonas syringae pv. syringae (strain B728a) protein is Ferrochelatase.